We begin with the raw amino-acid sequence, 126 residues long: Adenosine 5'-monophosphoramidase HINT1 (126 aa).

Ala2 is subject to N-acetylalanine. Positions 18–126 constitute an HIT domain; sequence IFGKIIRKEI…GGRQMHWPPG (109 aa). An N6-acetyllysine mark is found at Lys21 and Lys30. Residue 43 to 44 coordinates AMP; sequence DI. Ser45 and Ser72 each carry phosphoserine. AMP contacts are provided by residues Asn99, 105–107, and 112–114; these read GQS and HLH. A Histidine triad motif motif is present at residues 110–114; sequence HVHLH. Catalysis depends on His112, which acts as the Tele-AMP-histidine intermediate.

It belongs to the HINT family. Homodimer. Interacts with CDK7. Interacts with RUVBL1 and RUVBL2 and is associated with the LEF1/TCF1-CTNNB1 complex and with a KAT5 histone acetyltransferase complex. Identified in a complex with MITF and CTNNB1. Interacts with CDC34 and RBX1, and is part of a SCF (SKP2-CUL1-F-box protein) E3 ubiquitin-protein ligase complex. Interacts with SUMO1, SUMO2 and RGS17. Interacts with the Ten-1 ICD form of TENM1. Interacts with CALM1; interaction increases in the presence of calcium ions. As to expression, widely expressed.

Its subcellular location is the cytoplasm. The protein resides in the nucleus. It carries out the reaction adenosine 5'-phosphoramidate + H2O = AMP + NH4(+). Functionally, exhibits adenosine 5'-monophosphoramidase activity, hydrolyzing purine nucleotide phosphoramidates with a single phosphate group such as adenosine 5'monophosphoramidate (AMP-NH2) to yield AMP and NH2. Hydrolyzes adenosine 5'monophosphomorpholidate (AMP-morpholidate) and guanosine 5'monophosphomorpholidate (GMP-morpholidate). Hydrolyzes lysyl-AMP (AMP-N-epsilon-(N-alpha-acetyl lysine methyl ester)) generated by lysine tRNA ligase, as well as Met-AMP, His-AMP and Asp-AMP, lysyl-GMP (GMP-N-epsilon-(N-alpha-acetyl lysine methyl ester)) and AMP-N-alanine methyl ester. Hydrolyzes 3-indolepropionic acyl-adenylate, tryptamine adenosine phosphoramidate monoester and other fluorogenic purine nucleoside tryptamine phosphoramidates in vitro. Can also convert adenosine 5'-O-phosphorothioate and guanosine 5'-O-phosphorothioate to the corresponding nucleoside 5'-O-phosphates with concomitant release of hydrogen sulfide. In addition, functions as scaffolding protein that modulates transcriptional activation by the LEF1/TCF1-CTNNB1 complex and by the complex formed with MITF and CTNNB1. Modulates p53/TP53 levels and p53/TP53-mediated apoptosis. Modulates proteasomal degradation of target proteins by the SCF (SKP2-CUL1-F-box protein) E3 ubiquitin-protein ligase complex. Also exhibits SUMO-specific isopeptidase activity, deconjugating SUMO1 from RGS17. Deconjugates SUMO1 from RANGAP1. In Homo sapiens (Human), this protein is Adenosine 5'-monophosphoramidase HINT1 (HINT1).